Reading from the N-terminus, the 362-residue chain is Isopentenyl-diphosphate delta-isomerase (362 aa).

6 to 7 (RK) is a binding site for substrate. Residues 65–67 (SIT), serine 95, and asparagine 124 each bind FMN. 95–97 (SQR) lines the substrate pocket. Glutamine 158 is a binding site for substrate. Residue glutamate 159 participates in Mg(2+) binding. FMN-binding positions include lysine 189, threonine 219, 269–271 (GVR), and 290–291 (AL).

The protein belongs to the IPP isomerase type 2 family. In terms of assembly, homooctamer. Dimer of tetramers. It depends on FMN as a cofactor. NADPH is required as a cofactor. Mg(2+) serves as cofactor.

Its subcellular location is the cytoplasm. It carries out the reaction isopentenyl diphosphate = dimethylallyl diphosphate. Functionally, involved in the biosynthesis of isoprenoids. Catalyzes the 1,3-allylic rearrangement of the homoallylic substrate isopentenyl (IPP) to its allylic isomer, dimethylallyl diphosphate (DMAPP). The sequence is that of Isopentenyl-diphosphate delta-isomerase from Methanococcoides burtonii (strain DSM 6242 / NBRC 107633 / OCM 468 / ACE-M).